A 916-amino-acid chain; its full sequence is Translation initiation factor IF-2 (916 aa).

The segment covering 151 to 191 has biased composition (basic and acidic residues); the sequence is NLDEQQRLAESDRARDEAIQRKRDEEQAAKDRVEAERKAAE. Disordered regions lie at residues 151 to 262 and 280 to 328; these read NLDE…SHVM and HLSA…ERPT. 2 stretches are compositionally biased toward low complexity: residues 192–243 and 293–305; these read EAAA…ATPA and RGKPTGRPGSSSS. The region spanning 415–584 is the tr-type G domain; sequence SRPPVVTIMG…SLQAEVLELK (170 aa). Residues 424–431 are G1; it reads GHVDHGKT. 424–431 serves as a coordination point for GTP; sequence GHVDHGKT. Positions 449-453 are G2; that stretch reads GITQH. The G3 stretch occupies residues 470–473; it reads DTPG. Residues 470–474 and 524–527 contribute to the GTP site; these read DTPGH and NKID. The segment at 524–527 is G4; sequence NKID. The segment at 560-562 is G5; that stretch reads SAK.

The protein belongs to the TRAFAC class translation factor GTPase superfamily. Classic translation factor GTPase family. IF-2 subfamily.

The protein resides in the cytoplasm. One of the essential components for the initiation of protein synthesis. Protects formylmethionyl-tRNA from spontaneous hydrolysis and promotes its binding to the 30S ribosomal subunits. Also involved in the hydrolysis of GTP during the formation of the 70S ribosomal complex. The protein is Translation initiation factor IF-2 of Xanthomonas campestris pv. campestris (strain B100).